The chain runs to 351 residues: UDP-N-acetylenolpyruvoylglucosamine reductase (351 aa).

Residues 11 to 213 (GVGGSIACFI…KQVRDQVLRI (203 aa)) form the FAD-binding PCMH-type domain. Arg-158 is a catalytic residue. Ser-239 (proton donor) is an active-site residue. Residue Glu-343 is part of the active site.

The protein belongs to the MurB family. Requires FAD as cofactor.

Its subcellular location is the cytoplasm. The catalysed reaction is UDP-N-acetyl-alpha-D-muramate + NADP(+) = UDP-N-acetyl-3-O-(1-carboxyvinyl)-alpha-D-glucosamine + NADPH + H(+). It participates in cell wall biogenesis; peptidoglycan biosynthesis. Its function is as follows. Cell wall formation. In Tropheryma whipplei (strain TW08/27) (Whipple's bacillus), this protein is UDP-N-acetylenolpyruvoylglucosamine reductase.